A 192-amino-acid chain; its full sequence is Thymidylate kinase (192 aa).

Position 7–14 (7–14) interacts with ATP; it reads GIDCVGKS.

It belongs to the thymidylate kinase family.

It catalyses the reaction dTMP + ATP = dTDP + ADP. Phosphorylation of dTMP to form dTDP in both de novo and salvage pathways of dTTP synthesis. The sequence is that of Thymidylate kinase from Campylobacter jejuni subsp. doylei (strain ATCC BAA-1458 / RM4099 / 269.97).